A 232-amino-acid polypeptide reads, in one-letter code: Transcriptional regulatory protein CpxR (232 aa).

Residues 3 to 115 (KILLVDDDRE…ELVARIRAIL (113 aa)) form the Response regulatory domain. Asp51 is modified (4-aspartylphosphate). Residues 131 to 230 (SPTLEVDALS…LRGRGYLMVS (100 aa)) constitute a DNA-binding region (ompR/PhoB-type).

As to quaternary structure, interacts with cognate sensor kinase CpxA. Post-translationally, phosphorylated by CpxA.

The protein resides in the cytoplasm. With respect to regulation, the two-component system is activated by envelope stress such as overexpression of some (misfolded) periplasmic proteins. Response regulator member of the two-component regulatory system CpxA/CpxR which responds to envelope stress response by activating or, in some cases, repressing expression of downstream genes. Binds to the promoter regions of various genes in vitro, including ompC, cpxP, ryhB and mrkA and, when CpxR is phosphorylated, pecO. Represses expression of the major pilin of type 3 fimbriae MrkA as well as that of type 1 fimbriae FimA. Repression of expression of MrkA appears to be indirect, mediated by activation of the iron homeostasis regulator RyhB. In Klebsiella pneumoniae subsp. pneumoniae (strain HS11286), this protein is Transcriptional regulatory protein CpxR.